Consider the following 225-residue polypeptide: Phosphoenolpyruvate guanylyltransferase (225 aa).

3 residues coordinate phosphoenolpyruvate: Thr-150, Gly-166, and Ser-169. The segment at 167-186 is disordered; the sequence is PESARGHANSGARPLNGQWP.

This sequence belongs to the CofC family.

The enzyme catalyses phosphoenolpyruvate + GTP + H(+) = enolpyruvoyl-2-diphospho-5'-guanosine + diphosphate. It functions in the pathway cofactor biosynthesis; coenzyme F420 biosynthesis. Functionally, guanylyltransferase that catalyzes the activation of phosphoenolpyruvate (PEP) as enolpyruvoyl-2-diphospho-5'-guanosine, via the condensation of PEP with GTP. It is involved in the biosynthesis of coenzyme F420, a hydride carrier cofactor. This Rhodococcus erythropolis (strain PR4 / NBRC 100887) protein is Phosphoenolpyruvate guanylyltransferase.